We begin with the raw amino-acid sequence, 339 residues long: Alpha-N-dichloroacetyl-p-aminophenylserinol N-oxygenase (339 aa).

A compositionally biased stretch (basic and acidic residues) spans M1–V19. Residues M1–G22 are disordered. Fe cation-binding residues include E109, E144, H147, E205, H232, E236, and H239.

The protein belongs to the AurF N-oxygenase family. It depends on Fe(2+) as a cofactor.

The catalysed reaction is alpha-N-dichloroacetyl-p-aminophenylserinol + AH2 + 2 O2 = chloramphenicol + A + 2 H2O. It functions in the pathway antibiotic biosynthesis. Involved in chloramphenicol biosynthesis. Catalyzes the six-electron oxidation of an aryl-amine precursor of chloramphenicol (NH2-CAM) to yield the aryl-nitro group of chloramphenicol (CAM). During catalysis, upon exposure of the diferrous cluster to O(2), ClmI forms an exceptionally long-lived peroxo intermediate (CmlI-peroxo), which reacts with NH2-CAM to form CAM. The sequence is that of Alpha-N-dichloroacetyl-p-aminophenylserinol N-oxygenase from Streptomyces venezuelae (strain ATCC 10712 / CBS 650.69 / DSM 40230 / JCM 4526 / NBRC 13096 / PD 04745).